The primary structure comprises 212 residues: Adenylate kinase (212 aa).

10–15 (GAGKGT) provides a ligand contact to ATP. The tract at residues 30–59 (AIGDIFRTIIKTSTSEAELINNYVRQGELI) is NMP. Residues R36, 57–59 (ELI), 85–88 (GYPR), and Q92 contribute to the AMP site. The tract at residues 122 to 160 (GRYSCKNCGKIYNRYFLQPKTDNVCDVCGSSTFDYRKDD) is LID. R123 is a binding site for ATP. 2 residues coordinate Zn(2+): C126 and C129. Residue 132-133 (IY) coordinates ATP. Zn(2+) contacts are provided by C146 and C149. Residues R157 and R168 each contribute to the AMP site. K196 serves as a coordination point for ATP.

The protein belongs to the adenylate kinase family. In terms of assembly, monomer.

It is found in the cytoplasm. It carries out the reaction AMP + ATP = 2 ADP. The protein operates within purine metabolism; AMP biosynthesis via salvage pathway; AMP from ADP: step 1/1. In terms of biological role, catalyzes the reversible transfer of the terminal phosphate group between ATP and AMP. Plays an important role in cellular energy homeostasis and in adenine nucleotide metabolism. The protein is Adenylate kinase of Rickettsia peacockii (strain Rustic).